Here is a 363-residue protein sequence, read N- to C-terminus: Probable methyltransferase-like protein 24 (363 aa).

Positions Met1 to Ser38 are cleaved as a signal peptide. A disordered region spans residues Gly37–Arg62.

This sequence belongs to the methyltransferase superfamily.

It localises to the secreted. Functionally, probable methyltransferase. The polypeptide is Probable methyltransferase-like protein 24 (Mettl24) (Rattus norvegicus (Rat)).